The following is a 2513-amino-acid chain: Polyprotein P1234 (2513 aa).

The Alphavirus-like MT domain occupies 28-259 (EPKQVTPNDH…ESRKLLQSWH (232 aa)). Residues 244–263 (GSTLYPESRKLLQSWHLPSV) are nsP1 membrane-binding. Residues C417 and C419 are each lipidated (S-palmitoyl cysteine; by host). A (+)RNA virus helicase ATP-binding domain is found at 690–842 (DLTSPPYHEF…HNICTQVYHK (153 aa)). A ribonucleoside 5'-triphosphate is bound at residue 721–728 (GVPGSGKS). One can recognise a (+)RNA virus helicase C-terminal domain in the interval 843 to 991 (SISRRCTLPV…IKEWEAEHAS (149 aa)). One can recognise a Peptidase C9 domain in the interval 1004–1327 (DTFQNKANVC…NQLNAVYAGL (324 aa)). The tract at residues 1005 to 1024 (TFQNKANVCWAKCLVPILDT) is nucleolus localization signal. C1013 acts as the For cysteine protease nsP2 activity in catalysis. Residues 1058–1067 (TRIYGVDLDS) carry the Nuclear export signal motif. The For cysteine protease nsP2 activity role is filled by H1083. The short motif at 1182 to 1186 (PTKRV) is the Nuclear localization signal element. ADP-D-ribose contacts are provided by D1343, N1357, G1365, G1445, V1446, and Y1447. The Zn(2+) site is built by C1595, C1597, C1620, and C1638. 2 consecutive short sequence motifs (FGDF; binding to host G3BP1) follow at residues 1851-1854 (FGDF) and 1869-1872 (FGDF). Residues 2267-2382 (DAVLETDIAS…HGVVSDALMA (116 aa)) form the RdRp catalytic domain.

As to quaternary structure, interacts with non-structural protein 3. Interacts with RNA-directed RNA polymerase nsP4. Interacts with protease nsP2. interacts with itself. In terms of assembly, interacts with mRNA-capping enzyme nsP1. Interacts with host DDX1. Interacts with host DDX3. Interacts (via C-terminus) with host G3BP1; this interaction inhibits the formation of host stress granules on viral mRNAs and the nsp3-G3BP1 complexes bind viral RNAs and probably orchestrate the assembly of viral replication complexes. Interacts (via C-terminus) with host G3BP2; this interaction inhibits the formation of host stress granules on viral mRNAs and the nsp3-G3BP2 complexes bind viral RNAs and probably orchestrate the assembly of viral replication complexes. Interacts with mRNA-capping enzyme nsP1. Interacts with protease nsP2. interacts with itself. As to quaternary structure, interacts with RNA-directed RNA polymerase nsP4. Interacts with mRNA-capping enzyme nsP1. Interacts with KPNA1/karyopherin-alpha1; this interaction probably allows the active transport of protease nsP2 into the host nucleus. It depends on Mg(2+) as a cofactor. Mn(2+) is required as a cofactor. In terms of processing, specific enzymatic cleavages in vivo yield mature proteins. The processing of the polyprotein is temporally regulated. In early stages (1.7 hpi), P1234 is first cleaved in trans through its nsP2 protease activity, releasing P123 and nsP4, which associate to form the early replication complex. At the same time, P1234 is also cut at the nsP1/nsP2 site early in infection but with lower efficiency. After replication of the viral minus-strand RNAs (4 hpi), the polyproteins are cut at the nsP1/nsP2 and nsP2/nsP3 sites very efficiently, preventing accumulation of P123 and P1234 and allowing the formation of the late replication complex. NsP3/nsP4 site is not cleaved anymore and P34 is produced rather than nsP4. Specific enzymatic cleavages in vivo yield mature proteins. The processing of the polyprotein is temporally regulated. In early stages (1.7 hpi), P123 is cleaved at the nsP1/nsP2 site with low efficiency. After replication of the viral minus-strand RNAs (4 hpi), the polyproteins are cut at the nsP1/nsP2 and nsP2/nsP3 sites very efficiently, preventing accumulation of P123 and allowing the formation of the late replication complex. Post-translationally, palmitoylated by host palmitoyltransferases ZDHHC2 and ZDHHC19. In terms of processing, phosphorylated by host on serines and threonines. Ubiquitinated; targets the protein for rapid degradation via the ubiquitin system. Nsp4 is present in extremely low quantities due to low frequency of translation through the amber stop-codon and the degradation by the ubiquitin pathway.

The protein resides in the host cytoplasmic vesicle membrane. It is found in the host cell membrane. It localises to the host cell projection. The protein localises to the host filopodium. Its subcellular location is the host nucleus. The protein resides in the host cytoplasm. It catalyses the reaction GTP + S-adenosyl-L-methionine = N(7)-methyl-GTP + S-adenosyl-L-homocysteine. It carries out the reaction N(7)-methyl-GTP + L-histidyl-[protein] = N(tele)-(N(7)-methylguanosine 5'-phospho)-L-histidyl-[protein] + diphosphate. The enzyme catalyses N(tele)-(N(7)-methylguanosine 5'-phospho)-L-histidyl-[protein] + a 5'-end diphospho-(purine-ribonucleoside) in mRNA + H(+) = a 5'-end (N(7)-methyl 5'-triphosphoguanosine)-(purine-ribonucleoside) in mRNA + L-histidyl-[protein]. The catalysed reaction is a 5'-end triphospho-ribonucleoside in mRNA + H2O = a 5'-end diphospho-ribonucleoside in mRNA + phosphate + H(+). It catalyses the reaction a ribonucleoside 5'-triphosphate + H2O = a ribonucleoside 5'-diphosphate + phosphate + H(+). It carries out the reaction ATP + H2O = ADP + phosphate + H(+). The enzyme catalyses RNA(n) + a ribonucleoside 5'-triphosphate = RNA(n+1) + diphosphate. The catalysed reaction is 4-O-(ADP-D-ribosyl)-L-aspartyl-[protein] + H2O = L-aspartyl-[protein] + ADP-D-ribose + H(+). It catalyses the reaction 5-O-(ADP-D-ribosyl)-L-glutamyl-[protein] + H2O = L-glutamyl-[protein] + ADP-D-ribose + H(+). It carries out the reaction RNA(n) + ATP = RNA(n)-3'-adenine ribonucleotide + diphosphate. The enzyme catalyses ADP-alpha-D-ribose 1''-phosphate + H2O = ADP-D-ribose + phosphate. Functionally, inactive precursor of the viral replicase, which is activated by cleavages carried out by the viral protease nsP2. The early replication complex formed by the polyprotein P123 and nsP4 synthesizes minus-strand RNAs. As soon P123 is cleaved into mature proteins, the plus-strand RNAs synthesis begins. In terms of biological role, cytoplasmic capping enzyme that catalyzes two virus-specific reactions: methyltransferase and nsP1 guanylyltransferase. mRNA-capping is necessary since all viral RNAs are synthesized in the cytoplasm, and host capping enzymes are restricted to the nucleus. The enzymatic reaction involves a covalent link between 7-methyl-GMP and nsP1, whereas eukaryotic capping enzymes form a covalent complex only with GMP. nsP1 capping consists in the following reactions: GTP is first methylated into 7-methyl-GMP and then is covalently linked to nsP1 to form the m7GMp-nsP1 complex from which 7-methyl-GMP complex is transferred to the mRNA to create the cap structure. NsP1 is also needed for the initiation of the minus-strand RNAs synthesis. Probably serves as a membrane anchor for the replication complex composed of nsP1-nsP4. Palmitoylated nsP1 is remodeling host cell cytoskeleton, and induces filopodium-like structure formation at the surface of the host cell. Its function is as follows. Multifunctional protein whose N-terminus is part of the RNA polymerase complex and displays NTPase, RNA triphosphatase and helicase activities. NTPase and RNA triphosphatase are involved in viral RNA capping and helicase keeps a check on the dsRNA replication intermediates. The C-terminus harbors a protease that specifically cleaves the polyproteins and releases the mature proteins. Required for the shutoff of minus-strand RNAs synthesis. Specifically inhibits the host IFN response by promoting the nuclear export of host STAT1. Also inhibits host transcription by inducing the rapid proteasome-dependent degradation of POLR2A, a catalytic subunit of the RNAPII complex. The resulting inhibition of cellular protein synthesis serves to ensure maximal viral gene expression and to evade host immune response. Functionally, seems to be essential for minus-strand RNAs and subgenomic 26S mRNAs synthesis. Displays mono-ADP-ribosylhydrolase activity. ADP-ribosylation is a post-translational modification that controls various processes of the host cell and the virus probably needs to revert it for optimal viral replication. Binds proteins of G3BP family and sequesters them into the viral RNA replication complexes thereby inhibiting the formation of host stress granules on viral mRNAs. The nsp3-G3BP complexes bind viral RNAs and probably orchestrate the assembly of viral replication complexes, thanks to the ability of G3BP family members to self-assemble and bind DNA. RNA dependent RNA polymerase. Replicates genomic and antigenomic RNA by recognizing replications specific signals. The early replication complex formed by the polyprotein P123 and nsP4 synthesizes minus-strand RNAs. The late replication complex composed of fully processed nsP1-nsP4 is responsible for the production of genomic and subgenomic plus-strand RNAs. This chain is Polyprotein P1234, found in Anopheles (Human).